Here is a 746-residue protein sequence, read N- to C-terminus: Hyperosmolality-gated Ca2+ permeable channel 2.1 (746 aa).

10 helical membrane-spanning segments follow: residues 3–23 (ISAL…LLSL), 90–110 (MVIF…AFVL), 144–164 (LWVH…LLYF), 357–377 (IATL…VTFI), 405–425 (VITG…VPPL), 445–465 (ACIK…ILSG), 492–512 (AGFF…CEIM), 560–580 (VIAP…YLIY), 601–621 (IFHN…LGFF), and 623–643 (LKLS…TLLF). Over residues 692–702 (LHSQKSSSKAE) the composition is skewed to polar residues. The tract at residues 692-723 (LHSQKSSSKAECSNPFKKQELPDPEKLKPEEG) is disordered. Residues 708–723 (KKQELPDPEKLKPEEG) show a composition bias toward basic and acidic residues.

The protein belongs to the CSC1 (TC 1.A.17) family.

Its subcellular location is the membrane. Functionally, acts as an osmosensitive calcium-permeable cation channel. This is Hyperosmolality-gated Ca2+ permeable channel 2.1 from Arabidopsis thaliana (Mouse-ear cress).